The primary structure comprises 577 residues: Aspartate--tRNA(Asp/Asn) ligase (577 aa).

E171 serves as a coordination point for L-aspartate. Residues 195–198 (QLFK) form an aspartate region. L-aspartate is bound at residue R217. ATP-binding positions include 217–219 (RDE) and Q226. H444 provides a ligand contact to L-aspartate. E474 lines the ATP pocket. R481 serves as a coordination point for L-aspartate. 526 to 529 (GFDR) serves as a coordination point for ATP.

It belongs to the class-II aminoacyl-tRNA synthetase family. Type 1 subfamily. In terms of assembly, homodimer.

It localises to the cytoplasm. The catalysed reaction is tRNA(Asx) + L-aspartate + ATP = L-aspartyl-tRNA(Asx) + AMP + diphosphate. In terms of biological role, aspartyl-tRNA synthetase with relaxed tRNA specificity since it is able to aspartylate not only its cognate tRNA(Asp) but also tRNA(Asn). Is 1.7 times more efficient at aminoacylating tRNA(Asp) over tRNA(Asn). Reaction proceeds in two steps: L-aspartate is first activated by ATP to form Asp-AMP and then transferred to the acceptor end of tRNA(Asp/Asn). This chain is Aspartate--tRNA(Asp/Asn) ligase, found in Helicobacter pylori (strain ATCC 700392 / 26695) (Campylobacter pylori).